A 467-amino-acid chain; its full sequence is Ethanolamine ammonia-lyase reactivase EutA (467 aa).

The protein belongs to the EutA family.

It localises to the bacterial microcompartment. The protein operates within amine and polyamine degradation; ethanolamine degradation. In terms of biological role, reactivates suicidally inhibited ethanolamine ammonia-lyase (EAL), cyanocobalamin-inactivated EAL and O(2)-inactivated EAL; requires Mg(2+), ATP and adenosylcobalamin. Reactivation probably occurs by the ATP-dependent exchange of cobalamin. Protects EAL from inhibition by CN-B12, does not have adenosylation activity. Functionally, expression of the eut operon allows this bacteria to use ethanolamine as a carbon, nitrogen and energy source. It relies on cobalamin (vitamin B12) both as a cofactor for the ethanolamine ammonia-lyase (EAL) activity and to induce the operon. EA enhances bacterial survival in macrophages in a concentration-dependent manner, suggesting it is an important nutrient during infection. In Salmonella typhimurium (strain LT2 / SGSC1412 / ATCC 700720), this protein is Ethanolamine ammonia-lyase reactivase EutA.